The chain runs to 381 residues: Protein TRIGALACTOSYLDIACYLGLYCEROL 2, chloroplastic (381 aa).

The transit peptide at 1 to 45 directs the protein to the chloroplast; sequence MIGNPVIQVPSSLMPSSSMIACPRVSPNGVPYLPPKPRTRHLVVR. Over 46–96 the chain is Stromal; sequence AASNSDAAHGQPSSDGGKNPLTVVLDVPRNIWRQTLKPLSDFGFGKRSIWE. Residues 97–117 traverse the membrane as a helical segment; sequence GGVGLFIVSGATLLALSWAWL. Residues 118–381 lie on the Chloroplast intermembrane side of the membrane; that stretch reads RGFQMRSKFR…LLIKSLSRLL (264 aa).

As to quaternary structure, homomultimer. Substrate-binding subunit of the TGD complex, a lipid translocator at the inner chloroplast envelope membrane made of TGD1, TGD2 and TGD3. Interacts with TGD1 and TGD3 with an overall subunit stoichiometry of 2 TGD1, 2 TGD3 and 8 to 12 TGD2. Interacts with TGD5.

Its subcellular location is the plastid. It is found in the chloroplast inner membrane. Its function is as follows. Component of a phosphatidic acid/lipid transport complex in the chloroplast envelope. Specifically binds phosphatidic acid (PA). Involved in lipid transfer from the endoplasmic reticulum (ER) to plastids, and necessary for thylakoids formation. The sequence is that of Protein TRIGALACTOSYLDIACYLGLYCEROL 2, chloroplastic from Arabidopsis thaliana (Mouse-ear cress).